The sequence spans 631 residues: Glutamyl-tRNA(Gln) amidotransferase subunit E (631 aa).

The protein belongs to the GatB/GatE family. GatE subfamily. In terms of assembly, heterodimer of GatD and GatE.

It carries out the reaction L-glutamyl-tRNA(Gln) + L-glutamine + ATP + H2O = L-glutaminyl-tRNA(Gln) + L-glutamate + ADP + phosphate + H(+). Functionally, allows the formation of correctly charged Gln-tRNA(Gln) through the transamidation of misacylated Glu-tRNA(Gln) in organisms which lack glutaminyl-tRNA synthetase. The reaction takes place in the presence of glutamine and ATP through an activated gamma-phospho-Glu-tRNA(Gln). The GatDE system is specific for glutamate and does not act on aspartate. The protein is Glutamyl-tRNA(Gln) amidotransferase subunit E of Methanococcus maripaludis (strain C6 / ATCC BAA-1332).